The following is a 194-amino-acid chain: 3-isopropylmalate dehydratase small subunit (194 aa).

The protein belongs to the LeuD family. LeuD type 1 subfamily. Heterodimer of LeuC and LeuD.

The catalysed reaction is (2R,3S)-3-isopropylmalate = (2S)-2-isopropylmalate. The protein operates within amino-acid biosynthesis; L-leucine biosynthesis; L-leucine from 3-methyl-2-oxobutanoate: step 2/4. Catalyzes the isomerization between 2-isopropylmalate and 3-isopropylmalate, via the formation of 2-isopropylmaleate. This is 3-isopropylmalate dehydratase small subunit from Halalkalibacterium halodurans (strain ATCC BAA-125 / DSM 18197 / FERM 7344 / JCM 9153 / C-125) (Bacillus halodurans).